We begin with the raw amino-acid sequence, 311 residues long: Probable cobalamin biosynthesis protein CobD (311 aa).

Transmembrane regions (helical) follow at residues 53-73 (FIFG…AIYG), 76-96 (ILIN…FLIS), 157-177 (DSII…AFIY), and 288-308 (FSID…YVIF).

This sequence belongs to the CobD/CbiB family.

Its subcellular location is the cell membrane. It participates in cofactor biosynthesis; adenosylcobalamin biosynthesis. In terms of biological role, converts cobyric acid to cobinamide by the addition of aminopropanol on the F carboxylic group. The chain is Probable cobalamin biosynthesis protein CobD from Methanococcus aeolicus (strain ATCC BAA-1280 / DSM 17508 / OCM 812 / Nankai-3).